The sequence spans 596 residues: Aspartate--tRNA(Asp/Asn) ligase (596 aa).

L-aspartate is bound at residue E175. Residues 199-202 (QQYK) form an aspartate region. L-aspartate-binding residues include R221 and H454. 221 to 223 (RDE) contacts ATP. E488 contacts ATP. R495 contacts L-aspartate. ATP is bound at residue 540–543 (GIDR).

It belongs to the class-II aminoacyl-tRNA synthetase family. Type 1 subfamily. As to quaternary structure, homodimer.

Its subcellular location is the cytoplasm. It catalyses the reaction tRNA(Asx) + L-aspartate + ATP = L-aspartyl-tRNA(Asx) + AMP + diphosphate. In terms of biological role, aspartyl-tRNA synthetase with relaxed tRNA specificity since it is able to aspartylate not only its cognate tRNA(Asp) but also tRNA(Asn). Reaction proceeds in two steps: L-aspartate is first activated by ATP to form Asp-AMP and then transferred to the acceptor end of tRNA(Asp/Asn). The chain is Aspartate--tRNA(Asp/Asn) ligase from Mesorhizobium japonicum (strain LMG 29417 / CECT 9101 / MAFF 303099) (Mesorhizobium loti (strain MAFF 303099)).